The sequence spans 779 residues: Acyl-CoA dehydrogenase family member 11 (779 aa).

Lysine 175 carries the N6-acetyllysine modification. Residue serine 210 is modified to Phosphoserine. At tyrosine 323 the chain carries Phosphotyrosine. Residues lysine 368 and lysine 390 each carry the N6-succinyllysine modification. Residues 503–513, 511–513, 537–539, and serine 539 each bind FAD; these read FCMTEPNVSSS, SSS, and WSS. Serine 513 is a binding site for substrate. Substrate is bound at residue 628 to 631; it reads GPGR. FAD is bound by residues arginine 656, glutamine 726, and 726-730; that span reads QVHGG. Glycine 754 serves as a coordination point for substrate. FAD contacts are provided by residues 755–757 and glutamate 757; that span reads PDE. Lysine 765 is subject to N6-acetyllysine.

It belongs to the acyl-CoA dehydrogenase family. Homodimer. Requires FAD as cofactor.

It localises to the peroxisome. The protein localises to the mitochondrion membrane. The enzyme catalyses a 2,3-saturated acyl-CoA + oxidized [electron-transfer flavoprotein] + H(+) = a (2E)-enoyl-CoA + reduced [electron-transfer flavoprotein]. It catalyses the reaction docosanoyl-CoA + oxidized [electron-transfer flavoprotein] + H(+) = (2E)-docosenoyl-CoA + reduced [electron-transfer flavoprotein]. It carries out the reaction tetracosanoyl-CoA + oxidized [electron-transfer flavoprotein] + H(+) = (2E)-tetracosenoyl-CoA + reduced [electron-transfer flavoprotein]. The catalysed reaction is eicosanoyl-CoA + oxidized [electron-transfer flavoprotein] + H(+) = (2E)-eicosenoyl-CoA + reduced [electron-transfer flavoprotein]. The enzyme catalyses hexacosanoyl-CoA + oxidized [electron-transfer flavoprotein] + H(+) = (2E)-hexacosenoyl-CoA + reduced [electron-transfer flavoprotein]. It catalyses the reaction tricosanoyl-CoA + oxidized [electron-transfer flavoprotein] + H(+) = (2E)-tricosenoyl-CoA + reduced [electron-transfer flavoprotein]. It functions in the pathway lipid metabolism; fatty acid beta-oxidation. Functionally, acyl-CoA dehydrogenase, that exhibits maximal activity towards saturated C22-CoA. Probably participates in beta-oxydation and energy production but could also play a role in the metabolism of specific fatty acids to control fatty acids composition of cellular lipids in brain. The protein is Acyl-CoA dehydrogenase family member 11 (Acad11) of Rattus norvegicus (Rat).